Consider the following 501-residue polypeptide: Postreplication repair E3 ubiquitin-protein ligase rad18 (501 aa).

Residues 34–72 (CHVCKDFYDSPMLTSCNHTFCSLCIRRCLSVDSKCPLCR) form an RING-type zinc finger. Positions 111 to 154 (QAILPDQAGPSSPSKRKATEMEGPKEEDPESKRPRRSTRSTRAR) are disordered. Positions 127–142 (KATEMEGPKEEDPESK) are enriched in basic and acidic residues. Basic residues predominate over residues 143–152 (RPRRSTRSTR). A UBZ4-type zinc finger spans residues 186–214 (LVACPICLTRMKEQQVDRHLDTSCPGSPQ). Zn(2+) contacts are provided by C189, C192, H204, and C209. The interval 203-250 (RHLDTSCPGSPQAASKRRPIPAQTPQPSTFPSFNTRLTSQTNQKPPER) is disordered. The span at 225–246 (QTPQPSTFPSFNTRLTSQTNQK) shows a compositional bias: polar residues. An SAP domain is found at 256–290 (YSMLRDTALRKKLSELGLSTHGSRQLLEKRHKEWI). Residues 377-501 (IKRQTLDGNG…GMKKPNPETC (125 aa)) are disordered.

Belongs to the RAD18 family. As to quaternary structure, interacts with E2 mus-8/ubc2, forming a complex with ubiquitin ligase activity.

The protein resides in the nucleus. The enzyme catalyses S-ubiquitinyl-[E2 ubiquitin-conjugating enzyme]-L-cysteine + [acceptor protein]-L-lysine = [E2 ubiquitin-conjugating enzyme]-L-cysteine + N(6)-ubiquitinyl-[acceptor protein]-L-lysine.. It participates in protein modification; protein ubiquitination. E3 RING-finger protein, member of the UBC2/RAD6 epistasis group. Associates to the E2 ubiquitin conjugating enzyme mus-8/ubc2 to form the mus-8/ubc2-uvs-2/rad18 ubiquitin ligase complex involved in postreplicative repair (PRR) of damaged DNA. The protein is Postreplication repair E3 ubiquitin-protein ligase rad18 (uvs-2) of Neurospora crassa (strain ATCC 24698 / 74-OR23-1A / CBS 708.71 / DSM 1257 / FGSC 987).